Here is a 155-residue protein sequence, read N- to C-terminus: Protein Smg homolog (155 aa).

The protein belongs to the Smg family.

In Azoarcus sp. (strain BH72), this protein is Protein Smg homolog.